A 596-amino-acid chain; its full sequence is Arginine--tRNA ligase (596 aa).

A 'HIGH' region motif is present at residues 123-133; sequence PNTNKPLHLGH.

It belongs to the class-I aminoacyl-tRNA synthetase family. Monomer.

It localises to the cytoplasm. The catalysed reaction is tRNA(Arg) + L-arginine + ATP = L-arginyl-tRNA(Arg) + AMP + diphosphate. In Amoebophilus asiaticus (strain 5a2), this protein is Arginine--tRNA ligase.